A 195-amino-acid polypeptide reads, in one-letter code: Cysteine/O-acetylserine efflux protein (195 aa).

At methionine 1 to serine 7 the chain is on the periplasmic side. Residues alanine 8 to leucine 28 form a helical membrane-spanning segment. Residues serine 29–methionine 46 are Cytoplasmic-facing. The chain crosses the membrane as a helical span at residues serine 47–isoleucine 67. At aspartate 68–proline 69 the chain is on the periplasmic side. A helical membrane pass occupies residues alanine 70–isoleucine 90. Residues alanine 91 to proline 104 are Cytoplasmic-facing. The helical transmembrane segment at isoleucine 105–valine 125 threads the bilayer. At threonine 126–tryptophan 141 the chain is on the periplasmic side. The helical transmembrane segment at valine 142–leucine 162 threads the bilayer. Over alanine 163–arginine 176 the chain is Cytoplasmic. A helical membrane pass occupies residues glutamine 177–phenylalanine 194. Residue tyrosine 195 is a topological domain, periplasmic.

Belongs to the Rht family.

The protein resides in the cell inner membrane. It carries out the reaction O-acetyl-L-serine(in) = O-acetyl-L-serine(out). It catalyses the reaction L-cysteine(in) = L-cysteine(out). Its function is as follows. Exporter of O-acetylserine (OAS) and cysteine. This Escherichia coli O1:K1 / APEC protein is Cysteine/O-acetylserine efflux protein (eamB).